Here is a 514-residue protein sequence, read N- to C-terminus: Phospholipase C D (514 aa).

Positions 1–37 (MSQSHIGGVSRREFLAKVAAGGAGALMSFAGPVIEKA) form a signal peptide, tat-type signal. Positions 492-514 (VPDPQIMPTQETTPTRGIPSGPC) are disordered.

Belongs to the bacterial phospholipase C family. In terms of processing, predicted to be exported by the Tat system. The position of the signal peptide cleavage has not been experimentally proven.

Its subcellular location is the secreted. It is found in the cell wall. It catalyses the reaction a 1,2-diacyl-sn-glycero-3-phosphocholine + H2O = phosphocholine + a 1,2-diacyl-sn-glycerol + H(+). Involved in virulence. Induces cytotoxic effects on mouse macrophage cell lines, via direct or indirect enzymatic hydrolysis of cell membrane phospholipids. Hydrolyzes phosphatidylcholine. In Mycobacterium tuberculosis (strain CDC 1551 / Oshkosh), this protein is Phospholipase C D.